The primary structure comprises 139 residues: Bilirubin-inducible fluorescent protein UnaG (139 aa).

(4Z,15Z)-bilirubin IXalpha is bound by residues Asn57, Thr61, Ser80, Arg112, and Arg132–Tyr134.

It belongs to the calycin superfamily. Fatty-acid binding protein (FABP) family. As to quaternary structure, monomer. Detected in small-diameter muscle fibers from the white muscle layer from juvenile animals (glass eels) (at protein level). Detected in small-diameter muscle fibers from juvenile animals (glass eels).

Its subcellular location is the cytoplasm. Functionally, beta-barrel protein that binds unconjugated bilirubin with high affinity. Excitation of the bilirubin-bound protein gives rise to green fluorescence, both under normoxia and hypoxia. The apoprotein is not fluorescent. Does not emit fluorescence in the presence of ditauro-bilirubin, urobilin or biliverdin. This is Bilirubin-inducible fluorescent protein UnaG from Anguilla japonica (Japanese eel).